Reading from the N-terminus, the 169-residue chain is Ribosome maturation factor RimM (169 aa).

The region spanning 97–169 is the PRC barrel domain; sequence EDEYYWTDLV…TITADWGLDY (73 aa).

It belongs to the RimM family. As to quaternary structure, binds ribosomal protein uS19.

It localises to the cytoplasm. An accessory protein needed during the final step in the assembly of 30S ribosomal subunit, possibly for assembly of the head region. Essential for efficient processing of 16S rRNA. May be needed both before and after RbfA during the maturation of 16S rRNA. It has affinity for free ribosomal 30S subunits but not for 70S ribosomes. This chain is Ribosome maturation factor RimM, found in Neisseria meningitidis serogroup B (strain ATCC BAA-335 / MC58).